The primary structure comprises 43 residues: Protein PsbN (43 aa).

Residues 7 to 27 (LIIFIASLLLGLTGYSIYTAF) form a helical membrane-spanning segment.

Belongs to the PsbN family.

It is found in the plastid. It localises to the chloroplast thylakoid membrane. Its function is as follows. May play a role in photosystem I and II biogenesis. In Guillardia theta (Cryptophyte), this protein is Protein PsbN.